Here is a 20-residue protein sequence, read N- to C-terminus: LKDGPCPSYMDTCCLSPDRR.

It belongs to the peptidase S1 family.

It is found in the secreted. Binds the A.niger cell wall component alpha-1,3-glucan, a fungal pathogen-associated molecular pattern (PAMP) that activates the host immune response. This Galleria mellonella (Greater wax moth) protein is Putative serine protease.